The following is a 320-amino-acid chain: Ferrochelatase (320 aa).

Fe cation contacts are provided by His-194 and Glu-275.

Belongs to the ferrochelatase family. In terms of assembly, monomer.

It localises to the cytoplasm. It carries out the reaction heme b + 2 H(+) = protoporphyrin IX + Fe(2+). It functions in the pathway porphyrin-containing compound metabolism; protoheme biosynthesis; protoheme from protoporphyrin-IX: step 1/1. In terms of biological role, catalyzes the ferrous insertion into protoporphyrin IX. The chain is Ferrochelatase from Escherichia coli O127:H6 (strain E2348/69 / EPEC).